The primary structure comprises 243 residues: Small ribosomal subunit protein uS3 (243 aa).

The KH type-2 domain occupies I39–E110. The segment at Q216–S243 is disordered. The segment covering Q233 to S243 has biased composition (basic and acidic residues).

The protein belongs to the universal ribosomal protein uS3 family. Part of the 30S ribosomal subunit. Forms a tight complex with proteins S10 and S14.

Its function is as follows. Binds the lower part of the 30S subunit head. Binds mRNA in the 70S ribosome, positioning it for translation. This is Small ribosomal subunit protein uS3 from Prochlorococcus marinus (strain MIT 9215).